The sequence spans 622 residues: Chaperone protein HscA homolog (622 aa).

It belongs to the heat shock protein 70 family.

Its function is as follows. Chaperone involved in the maturation of iron-sulfur cluster-containing proteins. Has a low intrinsic ATPase activity which is markedly stimulated by HscB. This Burkholderia orbicola (strain MC0-3) protein is Chaperone protein HscA homolog.